A 125-amino-acid chain; its full sequence is Glycine cleavage system H protein (125 aa).

Positions 22–103 (VFVVGITENA…AFTAWIFKIK (82 aa)) constitute a Lipoyl-binding domain. An N6-lipoyllysine modification is found at Lys-63.

This sequence belongs to the GcvH family. In terms of assembly, the glycine cleavage system is composed of four proteins: P, T, L and H. The cofactor is (R)-lipoate.

The glycine cleavage system catalyzes the degradation of glycine. The H protein shuttles the methylamine group of glycine from the P protein to the T protein. In Bordetella avium (strain 197N), this protein is Glycine cleavage system H protein.